Here is a 152-residue protein sequence, read N- to C-terminus: Histone H2B.1 (152 aa).

The span at 1-28 (MAPKAEKKPAAKKPAEEEPAAEKAEKTP) shows a compositional bias: basic and acidic residues. A disordered region spans residues 1 to 60 (MAPKAEKKPAAKKPAEEEPAAEKAEKTPAGKKPKAEKRLPAGKSAAKEGGDKKGKKKAKK). Residues Lys-7 and Lys-37 each carry the N6-acetyllysine modification. Lys-148 participates in a covalent cross-link: Glycyl lysine isopeptide (Lys-Gly) (interchain with G-Cter in ubiquitin).

This sequence belongs to the histone H2B family. In terms of assembly, the nucleosome is a histone octamer containing two molecules each of H2A, H2B, H3 and H4 assembled in one H3-H4 heterotetramer and two H2A-H2B heterodimers. The octamer wraps approximately 147 bp of DNA. Can be acetylated to form H2BK6ac and H2BK33ac. Post-translationally, monoubiquitinated to form H2BK143ub1; may give a specific tag for epigenetic transcriptional activation.

Its subcellular location is the nucleus. It is found in the chromosome. Its function is as follows. Core component of nucleosome. Nucleosomes wrap and compact DNA into chromatin, limiting DNA accessibility to the cellular machineries which require DNA as a template. Histones thereby play a central role in transcription regulation, DNA repair, DNA replication and chromosomal stability. DNA accessibility is regulated via a complex set of post-translational modifications of histones, also called histone code, and nucleosome remodeling. This is Histone H2B.1 from Triticum aestivum (Wheat).